Consider the following 551-residue polypeptide: Intestinal-type alkaline phosphatase 2 (551 aa).

The N-terminal stretch at 1–19 (MQGAWVLLLLGFRLQLSLS) is a signal peptide. D61 serves as a coordination point for Mg(2+). Positions 61 and 111 each coordinate Zn(2+). S111 functions as the Phosphoserine intermediate in the catalytic mechanism. C140 and C202 are disulfide-bonded. N-linked (GlcNAc...) asparagine glycosylation occurs at N141. Residue S174 participates in Mg(2+) binding. Residue E235 participates in Ca(2+) binding. The N-linked (GlcNAc...) asparagine glycan is linked to N241. Ca(2+)-binding residues include F288, E289, and D304. E330 contributes to the Mg(2+) binding site. The Zn(2+) site is built by D335, H339, D376, and H377. N-linked (GlcNAc...) asparagine glycosylation is present at N426. C485 and C492 are disulfide-bonded. The disordered stretch occupies residues 496–537 (PPADENRPTTPVQNSTTTTTTTTTTTTTTTTTRVQNSASSLG). N509 carries N-linked (GlcNAc...) asparagine glycosylation. Residues 511-527 (TTTTTTTTTTTTTTTTT) show a composition bias toward low complexity. The span at 528–537 (RVQNSASSLG) shows a compositional bias: polar residues. The GPI-anchor amidated asparagine moiety is linked to residue N531. A propeptide spans 532 to 551 (SASSLGPATAPLAWHYWPRR) (removed in mature form).

This sequence belongs to the alkaline phosphatase family. Homodimer. The cofactor is Mg(2+). It depends on Zn(2+) as a cofactor. Ca(2+) is required as a cofactor.

The protein resides in the cell membrane. It carries out the reaction a phosphate monoester + H2O = an alcohol + phosphate. Its function is as follows. Alkaline phosphatase that can hydrolyze various phosphate compounds. The sequence is that of Intestinal-type alkaline phosphatase 2 from Rattus norvegicus (Rat).